The primary structure comprises 508 residues: Glutamate--cysteine ligase, chloroplastic (508 aa).

A chloroplast-targeting transit peptide spans 1–59; sequence MTTIFRLASSSSPSLRHDATPHNFHIRKTSISNTFSFSSKNSLSFKRILTSGGSRRFIV. 2 disulfides stabilise this stretch: Cys172-Cys392 and Cys335-Cys350.

Belongs to the carboxylate-amine ligase family. Glutamate--cysteine ligase type 2 subfamily. In terms of assembly, homodimer or monomer when oxidized or reduced, respectively. Post-translationally, the Cys-172-Cys-392 disulfide bridge is known to modulate the enzyme activity according to the redox status. The oxidized form constitutes the active enzyme.

It localises to the plastid. The protein localises to the chloroplast. It carries out the reaction L-cysteine + L-glutamate + ATP = gamma-L-glutamyl-L-cysteine + ADP + phosphate + H(+). The protein operates within sulfur metabolism; glutathione biosynthesis; glutathione from L-cysteine and L-glutamate: step 1/2. The sequence is that of Glutamate--cysteine ligase, chloroplastic (GSH1) from Medicago truncatula (Barrel medic).